Consider the following 421-residue polypeptide: Exopolysaccharide production protein ExoF (421 aa).

Positions 1–31 are cleaved as a signal peptide; sequence MQSNRRSGKSAGSRMVSCFTRLALLAALAAS.

Its subcellular location is the periplasm. It functions in the pathway glycan metabolism; exopolysaccharide biosynthesis. Involved in succinoglycan (EPS I) synthesis. Needed for the addition of the first sugar (galactose) to the isoprenoid carrier. This chain is Exopolysaccharide production protein ExoF (exoF), found in Rhizobium meliloti (strain 1021) (Ensifer meliloti).